A 132-amino-acid chain; its full sequence is Small ribosomal subunit protein uS8 (132 aa).

This sequence belongs to the universal ribosomal protein uS8 family. Part of the 30S ribosomal subunit. Contacts proteins S5 and S12.

In terms of biological role, one of the primary rRNA binding proteins, it binds directly to 16S rRNA central domain where it helps coordinate assembly of the platform of the 30S subunit. The protein is Small ribosomal subunit protein uS8 of Latilactobacillus sakei subsp. sakei (strain 23K) (Lactobacillus sakei subsp. sakei).